The primary structure comprises 344 residues: tRNA N6-adenosine threonylcarbamoyltransferase (344 aa).

Fe cation-binding residues include His-111 and His-115. Residues Leu-134–Gly-138, Asp-167, Gly-180, and Asn-274 contribute to the substrate site. Fe cation is bound at residue Asp-302.

It belongs to the KAE1 / TsaD family. Fe(2+) is required as a cofactor.

The protein localises to the cytoplasm. It catalyses the reaction L-threonylcarbamoyladenylate + adenosine(37) in tRNA = N(6)-L-threonylcarbamoyladenosine(37) in tRNA + AMP + H(+). Required for the formation of a threonylcarbamoyl group on adenosine at position 37 (t(6)A37) in tRNAs that read codons beginning with adenine. Is involved in the transfer of the threonylcarbamoyl moiety of threonylcarbamoyl-AMP (TC-AMP) to the N6 group of A37, together with TsaE and TsaB. TsaD likely plays a direct catalytic role in this reaction. The sequence is that of tRNA N6-adenosine threonylcarbamoyltransferase from Dechloromonas aromatica (strain RCB).